A 302-amino-acid polypeptide reads, in one-letter code: Stanniocalcin-2 (302 aa).

A signal peptide spans 1-24; sequence MCAERLGHFMTLALVLATIDPARG. The disordered stretch occupies residues 23-44; it reads RGTDATNPPEGPQDRSSQQKGR. A glycan (N-linked (GlcNAc...) asparagine) is linked at Asn73. Residues 218 to 302 are disordered; the sequence is PPTAPPERQP…EQSEYSDIRR (85 aa). Residues 227-264 show a composition bias toward basic and acidic residues; that stretch reads PQVDRAKLSRAHHGEAGHHLPEPSSRETGRGAKGERGS. Phosphoserine is present on residues Ser250 and Ser251. Thr254 is subject to Phosphothreonine.

Belongs to the stanniocalcin family. Homodimer; disulfide-linked.

The protein resides in the secreted. Has an anti-hypocalcemic action on calcium and phosphate homeostasis. The sequence is that of Stanniocalcin-2 (STC2) from Macaca nemestrina (Pig-tailed macaque).